The following is a 331-amino-acid chain: Glyceraldehyde-3-phosphate dehydrogenase (331 aa).

Residues 12-13 (RI), aspartate 34, arginine 78, and threonine 120 each bind NAD(+). Residues lysine 132 and lysine 138 each carry the N6-acetyllysine modification. D-glyceraldehyde 3-phosphate contacts are provided by residues 149–151 (SCT) and threonine 180. The active-site Nucleophile is the cysteine 150. An N6-acetyllysine modification is found at lysine 192. Residues 209-210 (TG) and arginine 232 contribute to the D-glyceraldehyde 3-phosphate site. The residue at position 249 (lysine 249) is an N6-acetyllysine. Residue asparagine 314 participates in NAD(+) binding.

This sequence belongs to the glyceraldehyde-3-phosphate dehydrogenase family. Homotetramer.

The protein localises to the cytoplasm. It catalyses the reaction D-glyceraldehyde 3-phosphate + phosphate + NAD(+) = (2R)-3-phospho-glyceroyl phosphate + NADH + H(+). It functions in the pathway carbohydrate degradation; glycolysis; pyruvate from D-glyceraldehyde 3-phosphate: step 1/5. In terms of biological role, catalyzes the oxidative phosphorylation of glyceraldehyde 3-phosphate (G3P) to 1,3-bisphosphoglycerate (BPG) using the cofactor NAD. The first reaction step involves the formation of a hemiacetal intermediate between G3P and a cysteine residue, and this hemiacetal intermediate is then oxidized to a thioester, with concomitant reduction of NAD to NADH. The reduced NADH is then exchanged with the second NAD, and the thioester is attacked by a nucleophilic inorganic phosphate to produce BPG. This chain is Glyceraldehyde-3-phosphate dehydrogenase (gapA), found in Escherichia coli O6:H1 (strain CFT073 / ATCC 700928 / UPEC).